Consider the following 428-residue polypeptide: Dihydroorotase (428 aa).

His-60 and His-62 together coordinate Zn(2+). Substrate contacts are provided by residues 62–64 (HLR) and Asn-94. The Zn(2+) site is built by Asp-152, His-179, and His-232. Asn-278 is a substrate binding site. Asp-305 is a Zn(2+) binding site. The active site involves Asp-305. A substrate-binding site is contributed by His-309.

This sequence belongs to the metallo-dependent hydrolases superfamily. DHOase family. Class I DHOase subfamily. The cofactor is Zn(2+).

It catalyses the reaction (S)-dihydroorotate + H2O = N-carbamoyl-L-aspartate + H(+). It functions in the pathway pyrimidine metabolism; UMP biosynthesis via de novo pathway; (S)-dihydroorotate from bicarbonate: step 3/3. Catalyzes the reversible cyclization of carbamoyl aspartate to dihydroorotate. The protein is Dihydroorotase of Ruminiclostridium cellulolyticum (strain ATCC 35319 / DSM 5812 / JCM 6584 / H10) (Clostridium cellulolyticum).